A 632-amino-acid chain; its full sequence is Thioredoxin domain-containing protein C959.05c (632 aa).

The signal sequence occupies residues 1–22 (MKLFLYHFTFIVYYFIISFSYA). N-linked (GlcNAc...) asparagine glycans are attached at residues Asn35, Asn41, and Asn140. Residues 153–284 (SDSSSTDPAF…LLSYSNQVAS (132 aa)) enclose the Thioredoxin domain. A disulfide bridge links Cys209 with Cys212. An N-linked (GlcNAc...) asparagine glycan is attached at Asn557. The chain crosses the membrane as a helical span at residues 583–603 (LIVFNLLIALLILSILTIISA).

Belongs to the protein disulfide isomerase family.

The protein resides in the endoplasmic reticulum membrane. It carries out the reaction Catalyzes the rearrangement of -S-S- bonds in proteins.. Its function is as follows. Acts as a membrane-bound chaperone in endoplasmic reticulum quality control. Probably facilitates presentation of substrate to membrane-bound components of the degradation machinery. The polypeptide is Thioredoxin domain-containing protein C959.05c (Schizosaccharomyces pombe (strain 972 / ATCC 24843) (Fission yeast)).